We begin with the raw amino-acid sequence, 255 residues long: Taurine import ATP-binding protein TauB (255 aa).

The region spanning Leu-2–Ala-229 is the ABC transporter domain. ATP is bound at residue Gly-34–Thr-41.

The protein belongs to the ABC transporter superfamily. Taurine importer (TC 3.A.1.17.1) family. In terms of assembly, the complex is composed of two ATP-binding proteins (TauB), two transmembrane proteins (TauC) and a solute-binding protein (TauA).

It is found in the cell inner membrane. It catalyses the reaction taurine(out) + ATP + H2O = taurine(in) + ADP + phosphate + H(+). In terms of biological role, part of the ABC transporter complex TauABC involved in taurine import. Responsible for energy coupling to the transport system. The sequence is that of Taurine import ATP-binding protein TauB from Yersinia pestis bv. Antiqua (strain Antiqua).